A 221-amino-acid chain; its full sequence is Phosphate-specific transport system accessory protein PhoU homolog 1 (221 aa).

This sequence belongs to the PhoU family. As to quaternary structure, homodimer.

It localises to the cytoplasm. In terms of biological role, plays a role in the regulation of phosphate uptake. In this role, it may bind, possibly as a chaperone, to PhoR, PhoP or a PhoR-PhoP complex to promote dephosphorylation of phospho-PhoP, or inhibit formation of the PhoR-PhoP transitory complex. The sequence is that of Phosphate-specific transport system accessory protein PhoU homolog 1 (phoU1) from Mycobacterium bovis (strain ATCC BAA-935 / AF2122/97).